The sequence spans 208 residues: Non-specific lipid transfer protein GPI-anchored 4 (208 aa).

A signal peptide spans 1 to 25; the sequence is MKQSLLLSFVLLLLSSSSLVTPIHA. N27, N67, and N105 each carry an N-linked (GlcNAc...) asparagine glycan. Disulfide bonds link C48-C91, C58-C75, C76-C116, and C89-C125. The interval 136-181 is disordered; that stretch reads GASPVSPSAGAPTTSPSAAKSPETSATSPSSDETPSMTAPSPSSSG. S179 carries GPI-anchor amidated serine lipidation. A propeptide spans 180–208 (removed in mature form); it reads SGTNILSVPALTIVFVIVSSVAYISAFSN.

This sequence belongs to the plant LTP family. As to expression, confined to the anthers and stamen of the inflorescence, especially in pollen.

The protein resides in the cell membrane. Its function is as follows. Lipid transfer protein involved in seed and ovule maturation and development, probably by regulating the fatty acids homeostasis during suberin and sporopollenin biosynthesis or deposition. The protein is Non-specific lipid transfer protein GPI-anchored 4 of Arabidopsis thaliana (Mouse-ear cress).